Here is an 865-residue protein sequence, read N- to C-terminus: Alanine--tRNA ligase (865 aa).

Positions 552, 556, 654, and 658 each coordinate Zn(2+).

The protein belongs to the class-II aminoacyl-tRNA synthetase family. The cofactor is Zn(2+).

The protein resides in the cytoplasm. It carries out the reaction tRNA(Ala) + L-alanine + ATP = L-alanyl-tRNA(Ala) + AMP + diphosphate. Catalyzes the attachment of alanine to tRNA(Ala) in a two-step reaction: alanine is first activated by ATP to form Ala-AMP and then transferred to the acceptor end of tRNA(Ala). Also edits incorrectly charged Ser-tRNA(Ala) and Gly-tRNA(Ala) via its editing domain. This is Alanine--tRNA ligase from Coxiella burnetii (strain Dugway 5J108-111).